The sequence spans 486 residues: Zinc finger chaperone ZPR1 (486 aa).

The interval 1 to 31 is disordered; sequence MSEQKEDLFKPVGEAAAEVEDESIAEQNKAN. Serine 23 is modified (phosphoserine). C4-type zinc fingers lie at residues 54–86 and 295–327; these read CMNC…CPHC and CPSC…CDHC. Threonine 407 is subject to Phosphothreonine.

Belongs to the ZPR1 family. Interacts with elongation factor 1-alpha.

The protein localises to the cytoplasm. It is found in the nucleus. Functionally, acts as a protein folding chaperone for elongation factor 1-alpha. The protein is Zinc finger chaperone ZPR1 of Saccharomyces cerevisiae (strain ATCC 204508 / S288c) (Baker's yeast).